Reading from the N-terminus, the 470-residue chain is 3-isopropylmalate dehydratase large subunit (470 aa).

Residues cysteine 351, cysteine 411, and cysteine 414 each coordinate [4Fe-4S] cluster.

The protein belongs to the aconitase/IPM isomerase family. LeuC type 1 subfamily. In terms of assembly, heterodimer of LeuC and LeuD. The cofactor is [4Fe-4S] cluster.

It carries out the reaction (2R,3S)-3-isopropylmalate = (2S)-2-isopropylmalate. Its pathway is amino-acid biosynthesis; L-leucine biosynthesis; L-leucine from 3-methyl-2-oxobutanoate: step 2/4. Its function is as follows. Catalyzes the isomerization between 2-isopropylmalate and 3-isopropylmalate, via the formation of 2-isopropylmaleate. The sequence is that of 3-isopropylmalate dehydratase large subunit from Rhodopseudomonas palustris (strain BisA53).